The following is a 242-amino-acid chain: Glucosamine-6-phosphate deaminase (242 aa).

Aspartate 67 functions as the Proton acceptor; for enolization step in the catalytic mechanism. The active-site For ring-opening step is asparagine 137. Catalysis depends on histidine 139, which acts as the Proton acceptor; for ring-opening step. Glutamate 144 serves as the catalytic For ring-opening step.

This sequence belongs to the glucosamine/galactosamine-6-phosphate isomerase family. NagB subfamily.

The catalysed reaction is alpha-D-glucosamine 6-phosphate + H2O = beta-D-fructose 6-phosphate + NH4(+). The protein operates within amino-sugar metabolism; N-acetylneuraminate degradation; D-fructose 6-phosphate from N-acetylneuraminate: step 5/5. In terms of biological role, catalyzes the reversible isomerization-deamination of glucosamine 6-phosphate (GlcN6P) to form fructose 6-phosphate (Fru6P) and ammonium ion. This chain is Glucosamine-6-phosphate deaminase, found in Staphylococcus saprophyticus subsp. saprophyticus (strain ATCC 15305 / DSM 20229 / NCIMB 8711 / NCTC 7292 / S-41).